Consider the following 264-residue polypeptide: Hydroxyethylthiazole kinase (264 aa).

A substrate-binding site is contributed by methionine 52. Arginine 127 and threonine 173 together coordinate ATP. A substrate-binding site is contributed by glycine 200.

Belongs to the Thz kinase family. Mg(2+) is required as a cofactor.

The catalysed reaction is 5-(2-hydroxyethyl)-4-methylthiazole + ATP = 4-methyl-5-(2-phosphooxyethyl)-thiazole + ADP + H(+). The protein operates within cofactor biosynthesis; thiamine diphosphate biosynthesis; 4-methyl-5-(2-phosphoethyl)-thiazole from 5-(2-hydroxyethyl)-4-methylthiazole: step 1/1. In terms of biological role, catalyzes the phosphorylation of the hydroxyl group of 4-methyl-5-beta-hydroxyethylthiazole (THZ). The protein is Hydroxyethylthiazole kinase of Serratia proteamaculans (strain 568).